A 334-amino-acid polypeptide reads, in one-letter code: Holliday junction branch migration complex subunit RuvB (334 aa).

The interval 1–182 (MDDRMIDGEL…FGVLSRLEYY (182 aa)) is large ATPase domain (RuvB-L). Residues Leu-21, Arg-22, Gly-63, Lys-66, Thr-67, Thr-68, 129–131 (EDF), Arg-172, Tyr-182, and Arg-219 each bind ATP. Thr-67 serves as a coordination point for Mg(2+). The small ATPAse domain (RuvB-S) stretch occupies residues 183 to 253 (EIKDLCNIVE…STKQALEMLQ (71 aa)). The tract at residues 256 to 334 (DAGLDHVDHK…HLGIKRTGED (79 aa)) is head domain (RuvB-H). DNA contacts are provided by Arg-311 and Arg-316.

This sequence belongs to the RuvB family. As to quaternary structure, homohexamer. Forms an RuvA(8)-RuvB(12)-Holliday junction (HJ) complex. HJ DNA is sandwiched between 2 RuvA tetramers; dsDNA enters through RuvA and exits via RuvB. An RuvB hexamer assembles on each DNA strand where it exits the tetramer. Each RuvB hexamer is contacted by two RuvA subunits (via domain III) on 2 adjacent RuvB subunits; this complex drives branch migration. In the full resolvosome a probable DNA-RuvA(4)-RuvB(12)-RuvC(2) complex forms which resolves the HJ.

It is found in the cytoplasm. It catalyses the reaction ATP + H2O = ADP + phosphate + H(+). Functionally, the RuvA-RuvB-RuvC complex processes Holliday junction (HJ) DNA during genetic recombination and DNA repair, while the RuvA-RuvB complex plays an important role in the rescue of blocked DNA replication forks via replication fork reversal (RFR). RuvA specifically binds to HJ cruciform DNA, conferring on it an open structure. The RuvB hexamer acts as an ATP-dependent pump, pulling dsDNA into and through the RuvAB complex. RuvB forms 2 homohexamers on either side of HJ DNA bound by 1 or 2 RuvA tetramers; 4 subunits per hexamer contact DNA at a time. Coordinated motions by a converter formed by DNA-disengaged RuvB subunits stimulates ATP hydrolysis and nucleotide exchange. Immobilization of the converter enables RuvB to convert the ATP-contained energy into a lever motion, pulling 2 nucleotides of DNA out of the RuvA tetramer per ATP hydrolyzed, thus driving DNA branch migration. The RuvB motors rotate together with the DNA substrate, which together with the progressing nucleotide cycle form the mechanistic basis for DNA recombination by continuous HJ branch migration. Branch migration allows RuvC to scan DNA until it finds its consensus sequence, where it cleaves and resolves cruciform DNA. The chain is Holliday junction branch migration complex subunit RuvB from Oceanobacillus iheyensis (strain DSM 14371 / CIP 107618 / JCM 11309 / KCTC 3954 / HTE831).